The chain runs to 107 residues: Thioredoxin-1 (107 aa).

One can recognise a Thioredoxin domain in the interval 2 to 106 (ASVRTMNDYH…LTNMMAKLVK (105 aa)). Residues cysteine 31 and cysteine 34 each act as nucleophile in the active site. Cysteine 31 and cysteine 34 form a disulfide bridge.

It belongs to the thioredoxin family. Ovary specific. Expressed present in the nurse cells from stage 9 of ovary development and is transported into the oocyte. Expressed throughout oogenesis.

The protein resides in the nucleus. Functionally, participates in various redox reactions through the reversible oxidation of its active center dithiol to a disulfide and catalyzes dithiol-disulfide exchange reactions. As a reducing substrate of peroxiredoxin 1, thioredoxin 2 is preferred over thioredoxin 1. Required for female meiosis and early embryonic development. This Drosophila melanogaster (Fruit fly) protein is Thioredoxin-1 (dhd).